A 336-amino-acid polypeptide reads, in one-letter code: MASSSRPKTDVLVGGRYKLVREIGFGSFGHVYLAIDLTNHEQVAVKLESENTRQPRLLHEKELYNFLQGGVGIPQIRWYGQETDYNVLVMDLLGPSLEDLFNFCSRRFSMKTVLMLADQMISRIEYVHSRNLIHRDIKPDNFLMGTGPQWKKLFLVDFGLAKKYRDNRTGQHIPHRSGKSFIGTPFCASISAHLGIEQSRRDDMESIGYVLMYFNRGSLPWQGLKAATLKQKCEKISEMKMTTPVDVLCKGFPIEFAMYLKYCLRLSFEEAPDYRYLRQLFRLLFRKLSYQHDYAFDWIVLKQKAEQQASSSSGEGQQAQTPTGKSDNTKSEMKHS.

The 269-residue stretch at 17 to 285 (YKLVREIGFG…YLRQLFRLLF (269 aa)) folds into the Protein kinase domain. Residues 23–31 (IGFGSFGHV) and Lys-46 each bind ATP. Asp-136 (proton acceptor) is an active-site residue. Positions 309-320 (ASSSSGEGQQAQ) are enriched in low complexity. Residues 309–336 (ASSSSGEGQQAQTPTGKSDNTKSEMKHS) form a disordered region. Over residues 327-336 (DNTKSEMKHS) the composition is skewed to basic and acidic residues.

Belongs to the protein kinase superfamily. CK1 Ser/Thr protein kinase family. Casein kinase I subfamily. Monomer.

It is found in the cytoplasm. The enzyme catalyses L-seryl-[protein] + ATP = O-phospho-L-seryl-[protein] + ADP + H(+). It carries out the reaction L-threonyl-[protein] + ATP = O-phospho-L-threonyl-[protein] + ADP + H(+). Functionally, casein kinases are operationally defined by their preferential utilization of acidic proteins such as caseins as substrates. It can phosphorylate a large number of proteins. Participates in Wnt signaling. The sequence is that of Casein kinase I isoform beta (CSNK1B) from Bos taurus (Bovine).